A 910-amino-acid chain; its full sequence is Protein translocase subunit SecA (910 aa).

Residues glutamine 87, 105–109 (GEGKT), and aspartate 512 each bind ATP. 3 stretches are compositionally biased toward basic and acidic residues: residues 561 to 571 (RHESRRIDNQL), 841 to 853 (EEER…ELAR), and 880 to 890 (TFEREARKVGR). 2 disordered regions span residues 561–584 (RHES…AGSS) and 835–910 (EEVD…GKIN). Residues cysteine 894, cysteine 896, cysteine 905, and histidine 906 each contribute to the Zn(2+) site. Residues 900-910 (KKYKQCHGKIN) show a composition bias toward basic residues.

This sequence belongs to the SecA family. As to quaternary structure, monomer and homodimer. Part of the essential Sec protein translocation apparatus which comprises SecA, SecYEG and auxiliary proteins SecDF-YajC and YidC. Zn(2+) serves as cofactor.

The protein localises to the cell inner membrane. It localises to the cytoplasm. It catalyses the reaction ATP + H2O + cellular proteinSide 1 = ADP + phosphate + cellular proteinSide 2.. In terms of biological role, part of the Sec protein translocase complex. Interacts with the SecYEG preprotein conducting channel. Has a central role in coupling the hydrolysis of ATP to the transfer of proteins into and across the cell membrane, serving both as a receptor for the preprotein-SecB complex and as an ATP-driven molecular motor driving the stepwise translocation of polypeptide chains across the membrane. The sequence is that of Protein translocase subunit SecA from Photobacterium profundum (strain SS9).